A 279-amino-acid polypeptide reads, in one-letter code: Diaminopimelate epimerase (279 aa).

The substrate site is built by N12, Q45, and N65. C74 functions as the Proton donor in the catalytic mechanism. Substrate-binding positions include 75 to 76 (GN), N162, N195, and 213 to 214 (ER). C222 (proton acceptor) is an active-site residue. 223-224 (GS) contacts substrate.

Belongs to the diaminopimelate epimerase family. As to quaternary structure, homodimer.

Its subcellular location is the cytoplasm. It carries out the reaction (2S,6S)-2,6-diaminopimelate = meso-2,6-diaminopimelate. The protein operates within amino-acid biosynthesis; L-lysine biosynthesis via DAP pathway; DL-2,6-diaminopimelate from LL-2,6-diaminopimelate: step 1/1. Its function is as follows. Catalyzes the stereoinversion of LL-2,6-diaminopimelate (L,L-DAP) to meso-diaminopimelate (meso-DAP), a precursor of L-lysine and an essential component of the bacterial peptidoglycan. This chain is Diaminopimelate epimerase, found in Shewanella loihica (strain ATCC BAA-1088 / PV-4).